Here is a 238-residue protein sequence, read N- to C-terminus: Testis-specific gene A8 protein (238 aa).

The segment at 35 to 238 (GKGAKTNKRG…GEAVATTTMT (204 aa)) is disordered. Positions 39 to 48 (KTNKRGKRGG) are enriched in basic residues. 8 consecutive repeat copies span residues 79–93 (AAAA…PESS), 94–108 (AAAA…PESS), 109–123 (AAAA…PESS), 124–138 (AAAA…LESS), 153–158 (PAAPEA), 171–176 (PAAPEA), 180–185 (PAAPEA), and 189–194 (PAAPEA). The tract at residues 79 to 148 (AAAAAPEAAA…AAAAAPEAAA (70 aa)) is 4 X 15 AA tandem repeats of A-A-A-A-A-P-E-A-A-A-S-[PL]-E-S-S. Low complexity-rich tracts occupy residues 79–200 (AAAA…AAPA) and 208–220 (WEAA…AAVK). Positions 153–194 (PAAPEAAAAPEVAAAPATPAAPEATAAPAAPEAATTPAAPEA) are 4 X 6 AA repeats of P-A-A-P-E-A.

In terms of tissue distribution, specifically expressed in testis (at protein level).

Its subcellular location is the cytoplasm. It is found in the nucleus. The protein resides in the nucleoplasm. The chain is Testis-specific gene A8 protein from Mus musculus (Mouse).